Consider the following 806-residue polypeptide: Integrin beta-7 (806 aa).

The first 19 residues, 1–19, serve as a signal peptide directing secretion; it reads MVDSSTVLIFLLVLGGGQS. Over 20 to 724 the chain is Extracellular; the sequence is ELDTKITSSG…PQEKGVDHTR (705 aa). The PSI domain occupies 44–92; sequence SCQPVPSCQKCILSHPSCAWCKQLNFTASGEAEARRCARREELLARGCP. 26 disulfides stabilise this stretch: Cys-51/Cys-476, Cys-54/Cys-80, Cys-64/Cys-91, Cys-216/Cys-223, Cys-271/Cys-311, Cys-412/Cys-428, Cys-448/Cys-474, Cys-478/Cys-497, Cys-488/Cys-500, Cys-502/Cys-511, Cys-513/Cys-545, Cys-527/Cys-543, Cys-537/Cys-548, Cys-550/Cys-559, Cys-561/Cys-582, Cys-566/Cys-580, Cys-574/Cys-585, Cys-587/Cys-596, Cys-598/Cys-621, Cys-605/Cys-619, Cys-613/Cys-624, Cys-626/Cys-635, Cys-638/Cys-641, Cys-645/Cys-688, Cys-651/Cys-670, and Cys-654/Cys-666. Asn-68 carries N-linked (GlcNAc...) asparagine glycosylation. Residues 98-107 show a composition bias toward basic and acidic residues; the sequence is EPRGRQEVLQ. The tract at residues 98-123 is disordered; sequence EPRGRQEVLQDKPLSQGDRGEGATQL. Residues 150–389 form the VWFA domain; the sequence is YPVDLYYLMD…QLIMDAYDSL (240 aa). The Mg(2+) site is built by Ser-161 and Ser-163. 4 residues coordinate Ca(2+): Ser-163, Asp-166, Asp-167, and Asp-198. An N-linked (GlcNAc...) asparagine glycan is attached at Asn-250. Ca(2+) is bound by residues Asn-254, Asp-256, Pro-258, and Glu-259. Glu-259 contributes to the Mg(2+) binding site. Asn-279 carries N-linked (GlcNAc...) asparagine glycosylation. The Ca(2+) site is built by Asp-289 and Glu-373. The N-linked (GlcNAc...) asparagine glycan is linked to Asn-434. 4 consecutive I-EGF domains span residues 478 to 512, 513 to 560, 561 to 597, and 598 to 636; these read CGDAQPHAPYCSDGQGDLQCGICSCAPGRLGQLCE, CSEA…RLCE, CDDASCERHEGILCGGFGHCQCGVCHCHANHTGRACE, and CSKSVDSCVSPEGGLCSGHGYCKCNRCQCLDGYYGALCD. Asn-531 carries N-linked (GlcNAc...) asparagine glycosylation. N-linked (GlcNAc...) asparagine glycosylation occurs at Asn-590. N-linked (GlcNAc...) asparagine glycans are attached at residues Asn-665 and Asn-674. Residues 725-745 form a helical membrane-spanning segment; it reads AIILGCTGGIVAVGLGLVLAY. The Cytoplasmic portion of the chain corresponds to 746-806; it reads RLSVEIYDRR…PSLSLTREAD (61 aa). Residues 786-806 form a disordered region; the sequence is NPRFQGTNGRSPSLSLTREAD.

This sequence belongs to the integrin beta chain family. As to quaternary structure, heterodimer of an alpha and a beta subunit. ITGB7/beta-7 associates with either ITGA4/alpha-4 or ITGAE/alpha-E. Integrin ITGA4/ITGB7 interacts with MADCAM1. Integrin ITGA4/ITGB7 interacts with VCAM1 and fibronectin. Interacts with FLNA (via filamin repeats 4, 9, 12, 17, 19, 21, and 23).

The protein resides in the cell membrane. Integrin ITGA4/ITGB7 (alpha-4/beta-7) (Peyer patches-specific homing receptor LPAM-1) is an adhesion molecule that mediates lymphocyte migration and homing to gut-associated lymphoid tissue (GALT). Integrin ITGA4/ITGB7 interacts with the cell surface adhesion molecules MADCAM1 which is normally expressed by the vascular endothelium of the gastrointestinal tract. Also interacts with VCAM1 and fibronectin, an extracellular matrix component. It recognizes one or more domains within the alternatively spliced CS-1 region of fibronectin. Interactions involve the tripeptide L-D-T in MADCAM1, and L-D-V in fibronectin. Integrin ITGAE/ITGB7 (alpha-E/beta-7, HML-1) is a receptor for E-cadherin. The polypeptide is Integrin beta-7 (Itgb7) (Mus musculus (Mouse)).